Reading from the N-terminus, the 465-residue chain is Serine/threonine-protein kinase 38 (465 aa).

N-acetylalanine is present on Ala-2. Positions 62 to 87 (KRLRRSAHARKETEFLRLKRTRLGLE) are interaction with S100B. The residue at position 74 (Thr-74) is a Phosphothreonine. Positions 89–382 (FESLKVIGRG…VEEIKNNSFF (294 aa)) constitute a Protein kinase domain. ATP-binding positions include 95–103 (IGRGAFGEV) and Lys-118. Catalysis depends on Asp-212, which acts as the Proton acceptor. Residue Ser-264 is modified to Phosphoserine. Ser-281 carries the phosphoserine; by autocatalysis modification. Residues 306 to 311 (WSLGVI) carry the UFM1-interacting motif (UFIM) motif. Positions 383–455 (EGVDWEHIRE…KRFEGLTARG (73 aa)) constitute an AGC-kinase C-terminal domain. Position 444 is a phosphothreonine; by STK24/MST3 (Thr-444).

The protein belongs to the protein kinase superfamily. AGC Ser/Thr protein kinase family. As to quaternary structure, homodimeric S100B binds two molecules of STK38. Interacts with MOB1 and MOB2. Interacts with MAP3K1 and MAP3K2 (via the kinase domain). Forms a tripartite complex with MOBKL1B and STK3/MST2. Interacts with MICAL1; leading to inhibit the protein kinase activity by antagonizing activation by MST1/STK4. Requires Mg(2+) as cofactor. ISGylated. Post-translationally, phosphorylated by STK3/MST2 and this is enhanced by MOBKL1B.

It localises to the nucleus. The protein resides in the cytoplasm. It is found in the chromosome. It carries out the reaction L-seryl-[protein] + ATP = O-phospho-L-seryl-[protein] + ADP + H(+). The enzyme catalyses L-threonyl-[protein] + ATP = O-phospho-L-threonyl-[protein] + ADP + H(+). Activated by binding of S100B which releases autoinhibitory N-lobe interactions, enabling ATP to bind and the autophosphorylation of Ser-281. Thr-444 then undergoes calcium-dependent phosphorylation by STK24/MST3. Interactions between phosphorylated Thr-444 and the N-lobe promote additional structural changes that complete the activation of the kinase. Autoinhibition is also released by the binding of MOB1/MOBKL1A and MOB2/HCCA2 to the N-terminal of STK38. Its function is as follows. Serine/threonine-protein kinase that acts as a negative regulator of MAP3K1/2 signaling. Converts MAP3K2 from its phosphorylated form to its non-phosphorylated form and inhibits autophosphorylation of MAP3K2. Acts as an ufmylation 'reader' in a kinase-independent manner: specifically recognizes and binds mono-ufmylated histone H4 in response to DNA damage, promoting the recruitment of SUV39H1 to the double-strand breaks, resulting in ATM activation. The polypeptide is Serine/threonine-protein kinase 38 (STK38) (Bos taurus (Bovine)).